A 278-amino-acid chain; its full sequence is NAD kinase (278 aa).

Catalysis depends on Asp56, which acts as the Proton acceptor. NAD(+) contacts are provided by residues 56 to 57 (DG), 132 to 133 (NE), Arg158, Asp160, and 171 to 176 (TAYNKS).

Belongs to the NAD kinase family. A divalent metal cation serves as cofactor.

It localises to the cytoplasm. It catalyses the reaction NAD(+) + ATP = ADP + NADP(+) + H(+). In terms of biological role, involved in the regulation of the intracellular balance of NAD and NADP, and is a key enzyme in the biosynthesis of NADP. Catalyzes specifically the phosphorylation on 2'-hydroxyl of the adenosine moiety of NAD to yield NADP. The protein is NAD kinase of Streptococcus agalactiae serotype III (strain NEM316).